The following is a 569-amino-acid chain: Proline--tRNA ligase (569 aa).

The protein belongs to the class-II aminoacyl-tRNA synthetase family. ProS type 1 subfamily. As to quaternary structure, homodimer.

It is found in the cytoplasm. It catalyses the reaction tRNA(Pro) + L-proline + ATP = L-prolyl-tRNA(Pro) + AMP + diphosphate. Its function is as follows. Catalyzes the attachment of proline to tRNA(Pro) in a two-step reaction: proline is first activated by ATP to form Pro-AMP and then transferred to the acceptor end of tRNA(Pro). As ProRS can inadvertently accommodate and process non-cognate amino acids such as alanine and cysteine, to avoid such errors it has two additional distinct editing activities against alanine. One activity is designated as 'pretransfer' editing and involves the tRNA(Pro)-independent hydrolysis of activated Ala-AMP. The other activity is designated 'posttransfer' editing and involves deacylation of mischarged Ala-tRNA(Pro). The misacylated Cys-tRNA(Pro) is not edited by ProRS. This is Proline--tRNA ligase from Dehalococcoides mccartyi (strain ATCC BAA-2100 / JCM 16839 / KCTC 5957 / BAV1).